Consider the following 286-residue polypeptide: 2-hydroxy-6-oxo-6-phenylhexa-2,4-dienoate hydrolase (286 aa).

Substrate contacts are provided by residues 42-43 (GG), asparagine 51, asparagine 111, threonine 180, and arginine 190. Histidine 265 acts as the Proton acceptor in catalysis. Residue tryptophan 266 coordinates substrate.

This sequence belongs to the AB hydrolase superfamily. BphD family. In terms of assembly, homodimer.

It carries out the reaction 2,6-dioxo-6-phenylhexa-3-enoate + H2O = 2-oxopent-4-enoate + benzoate + H(+). It participates in xenobiotic degradation; biphenyl degradation; 2-hydroxy-2,4-pentadienoate and benzoate from biphenyl: step 4/4. Catalyzes an unusual C-C bond hydrolysis of 2-hydroxy-6-oxo-6-phenylhexa-2,4-dienoic acid (HOPDA) to produce benzoic acid and 2-hydroxy-2,4-pentadienoic acid (HPD). In Comamonas testosteroni (Pseudomonas testosteroni), this protein is 2-hydroxy-6-oxo-6-phenylhexa-2,4-dienoate hydrolase.